Here is a 435-residue protein sequence, read N- to C-terminus: Serine hydroxymethyltransferase (435 aa).

Residues leucine 131 and 135 to 137 contribute to the (6S)-5,6,7,8-tetrahydrofolate site; that span reads GHL. Lysine 240 is subject to N6-(pyridoxal phosphate)lysine.

It belongs to the SHMT family. Homodimer. The cofactor is pyridoxal 5'-phosphate.

The protein resides in the cytoplasm. It catalyses the reaction (6R)-5,10-methylene-5,6,7,8-tetrahydrofolate + glycine + H2O = (6S)-5,6,7,8-tetrahydrofolate + L-serine. It functions in the pathway one-carbon metabolism; tetrahydrofolate interconversion. Its pathway is amino-acid biosynthesis; glycine biosynthesis; glycine from L-serine: step 1/1. In terms of biological role, catalyzes the reversible interconversion of serine and glycine with tetrahydrofolate (THF) serving as the one-carbon carrier. This reaction serves as the major source of one-carbon groups required for the biosynthesis of purines, thymidylate, methionine, and other important biomolecules. Also exhibits THF-independent aldolase activity toward beta-hydroxyamino acids, producing glycine and aldehydes, via a retro-aldol mechanism. The sequence is that of Serine hydroxymethyltransferase from Bifidobacterium longum subsp. infantis (strain ATCC 15697 / DSM 20088 / JCM 1222 / NCTC 11817 / S12).